The chain runs to 130 residues: Small ribosomal subunit protein uS8 (130 aa).

It belongs to the universal ribosomal protein uS8 family. As to quaternary structure, component of the small ribosomal subunit (SSU). Mature N.crassa ribosomes consist of a small (40S) and a large (60S) subunit. The 40S small subunit contains 1 molecule of ribosomal RNA (18S rRNA) and at least 32 different proteins. The large 60S subunit contains 3 rRNA molecules (26S, 5.8S and 5S rRNA) and at least 42 different proteins.

It localises to the cytoplasm. Its function is as follows. Component of the ribosome, a large ribonucleoprotein complex responsible for the synthesis of proteins in the cell. The small ribosomal subunit (SSU) binds messenger RNAs (mRNAs) and translates the encoded message by selecting cognate aminoacyl-transfer RNA (tRNA) molecules. The large subunit (LSU) contains the ribosomal catalytic site termed the peptidyl transferase center (PTC), which catalyzes the formation of peptide bonds, thereby polymerizing the amino acids delivered by tRNAs into a polypeptide chain. The nascent polypeptides leave the ribosome through a tunnel in the LSU and interact with protein factors that function in enzymatic processing, targeting, and the membrane insertion of nascent chains at the exit of the ribosomal tunnel. In Neurospora crassa (strain ATCC 24698 / 74-OR23-1A / CBS 708.71 / DSM 1257 / FGSC 987), this protein is Small ribosomal subunit protein uS8 (crp-27).